A 170-amino-acid polypeptide reads, in one-letter code: Alpha-crystallin A chain (170 aa).

The residue at position 1 (Met-1) is an N-acetylmethionine. The interval 1 to 63 (MDVTIQHPWF…RTVLDSGISE (63 aa)) is required for complex formation with BFSP1 and BFSP2. At Gln-6 the chain carries Deamidated glutamine; partial. Ser-45 carries the phosphoserine modification. Gln-50 carries the deamidated glutamine; partial modification. A sHSP domain is found at 52-161 (LFRTVLDSGI…SERTIPVSRE (110 aa)). N6-acetyllysine occurs at positions 70 and 99. His-100 is a binding site for Zn(2+). At Asn-101 the chain carries Deamidated asparagine; partial. Residues Glu-102, His-107, and His-151 each coordinate Zn(2+). Residues 144–170 (PKIVDPSHSERTIPVSREEKPSSAPSS) are disordered. Basic and acidic residues predominate over residues 148–164 (DPSHSERTIPVSREEKP). A glycan (O-linked (GlcNAc) serine) is linked at Ser-159.

This sequence belongs to the small heat shock protein (HSP20) family. Heteromer composed of three CRYAA and one CRYAB subunits. Inter-subunit bridging via zinc ions enhances stability, which is crucial as there is no protein turn over in the lens. Can also form homodimers and homotetramers (dimers of dimers) which serve as the building blocks of homooligomers. Within homooligomers, the zinc-binding motif is created from residues of 3 different molecules. His-100 and Glu-102 from one molecule are ligands of the zinc ion, and His-107 and His-151 residues from additional molecules complete the site with tetrahedral coordination geometry. Part of a complex required for lens intermediate filament formation composed of BFSP1, BFSP2 and CRYAA. Post-translationally, acetylation at Lys-70 may increase chaperone activity. In terms of processing, undergoes age-dependent proteolytical cleavage at the C-terminus.

The protein resides in the cytoplasm. It localises to the nucleus. Functionally, contributes to the transparency and refractive index of the lens. Acts as a chaperone, preventing aggregation of various proteins under a wide range of stress conditions. Required for the correct formation of lens intermediate filaments as part of a complex composed of BFSP1, BFSP2 and CRYAA. In Choloepus hoffmanni (Hoffmann's two-fingered sloth), this protein is Alpha-crystallin A chain (CRYAA).